Consider the following 237-residue polypeptide: MQKLAELYRGKAKTVYTTENPDLLVLEFRNDTSALDGQRIEQFDRKGMVNNKFNHFIMTKLEEAGIPTQMERLLSDTEVLVKKLEMIPVECVIRNRAAGSLVKRLGIEEGLSLNPPLFDLFLKNDAMHDPMVNESYCKTFGWATEAQLARMKELSYLANDVLSKLFDDAGLILVDFKLEFGLFNGEVVLGDEFSPDGSRLWDKKTLNKMDKDRYRQSLGGLIEAYEEVAHRIGVKLD.

This sequence belongs to the SAICAR synthetase family.

The catalysed reaction is 5-amino-1-(5-phospho-D-ribosyl)imidazole-4-carboxylate + L-aspartate + ATP = (2S)-2-[5-amino-1-(5-phospho-beta-D-ribosyl)imidazole-4-carboxamido]succinate + ADP + phosphate + 2 H(+). It functions in the pathway purine metabolism; IMP biosynthesis via de novo pathway; 5-amino-1-(5-phospho-D-ribosyl)imidazole-4-carboxamide from 5-amino-1-(5-phospho-D-ribosyl)imidazole-4-carboxylate: step 1/2. This chain is Phosphoribosylaminoimidazole-succinocarboxamide synthase, found in Yersinia pseudotuberculosis serotype O:1b (strain IP 31758).